The chain runs to 438 residues: MQVTVEKKEGIHCSLLIEVPANEVDSIVTKEINKTAKTIKMDGFRPGKVPAGMVEKKYGEQIRMEVISDLIPQKYSKAIQDEKLAVAGIEVELKENKKGEPLKFVANLELFPEFEVTGFEKIEVQKPVVELTDKEVKQMIENLRKQLATFSEVERAVQKDDKVVIDFVGKRDGEVFEGGSANDQELVIGSGQMIPGFEDGIIGMNKDEQRTITVTFPEDYQNKDLAGKEATFDITVKKIQEAQLPEVDDEFVAKFGVKGGVDTFEDEIKENMQRELKFILQRKVKDQVFKGLREIAEFETPKALIKREIDAAKQNLVKQMGGGQNFDVNQLPDNLFEANAKQKVETSLILDSIIESQKFQAEDAEVESLLDELVQAYEEPEKTKEQIKKNDREISNLKGLVIENKLTDWVLSQAQVTEKQEDFFEVIKENMQAQQAGF.

Residues 160 to 245 enclose the PPIase FKBP-type domain; it reads DDKVVIDFVG…VKKIQEAQLP (86 aa).

It belongs to the FKBP-type PPIase family. Tig subfamily.

It is found in the cytoplasm. It catalyses the reaction [protein]-peptidylproline (omega=180) = [protein]-peptidylproline (omega=0). Its function is as follows. Involved in protein export. Acts as a chaperone by maintaining the newly synthesized protein in an open conformation. Functions as a peptidyl-prolyl cis-trans isomerase. In Francisella philomiragia subsp. philomiragia (strain ATCC 25017 / CCUG 19701 / FSC 153 / O#319-036), this protein is Trigger factor.